The sequence spans 156 residues: Single-stranded DNA-binding protein 1 (156 aa).

An SSB domain is found at methionine 1–leucine 107. Low complexity predominate over residues phenylalanine 114–threonine 124. The tract at residues phenylalanine 114–glycine 156 is disordered.

Homotetramer.

This chain is Single-stranded DNA-binding protein 1 (ssb1), found in Streptomyces coelicolor (strain ATCC BAA-471 / A3(2) / M145).